The following is a 144-amino-acid chain: Large ribosomal subunit protein uL15 (144 aa).

The interval 1 to 52 (MRLNTLSPAEGAKHAPKRVGRGIGSGLGKTAGRGHKGQNSRSGGGVRRGFEG) is disordered. Over residues 21–31 (RGIGSGLGKTA) the composition is skewed to gly residues.

This sequence belongs to the universal ribosomal protein uL15 family. In terms of assembly, part of the 50S ribosomal subunit.

Functionally, binds to the 23S rRNA. In Yersinia pseudotuberculosis serotype O:1b (strain IP 31758), this protein is Large ribosomal subunit protein uL15.